A 373-amino-acid polypeptide reads, in one-letter code: Queuine tRNA-ribosyltransferase (373 aa).

The active-site Proton acceptor is Asp-90. Substrate contacts are provided by residues 90–94, Asp-144, Gln-193, and Gly-220; that span reads DSGGF. Residues 251–257 form an RNA binding region; it reads GVGTPED. Asp-270 (nucleophile) is an active-site residue. An RNA binding; important for wobble base 34 recognition region spans residues 275-279; it reads TRNAR. 4 residues coordinate Zn(2+): Cys-308, Cys-310, Cys-313, and His-339.

Belongs to the queuine tRNA-ribosyltransferase family. In terms of assembly, homodimer. Within each dimer, one monomer is responsible for RNA recognition and catalysis, while the other monomer binds to the replacement base PreQ1. It depends on Zn(2+) as a cofactor.

It catalyses the reaction 7-aminomethyl-7-carbaguanine + guanosine(34) in tRNA = 7-aminomethyl-7-carbaguanosine(34) in tRNA + guanine. It participates in tRNA modification; tRNA-queuosine biosynthesis. Its function is as follows. Catalyzes the base-exchange of a guanine (G) residue with the queuine precursor 7-aminomethyl-7-deazaguanine (PreQ1) at position 34 (anticodon wobble position) in tRNAs with GU(N) anticodons (tRNA-Asp, -Asn, -His and -Tyr). Catalysis occurs through a double-displacement mechanism. The nucleophile active site attacks the C1' of nucleotide 34 to detach the guanine base from the RNA, forming a covalent enzyme-RNA intermediate. The proton acceptor active site deprotonates the incoming PreQ1, allowing a nucleophilic attack on the C1' of the ribose to form the product. After dissociation, two additional enzymatic reactions on the tRNA convert PreQ1 to queuine (Q), resulting in the hypermodified nucleoside queuosine (7-(((4,5-cis-dihydroxy-2-cyclopenten-1-yl)amino)methyl)-7-deazaguanosine). This chain is Queuine tRNA-ribosyltransferase, found in Campylobacter jejuni subsp. jejuni serotype O:23/36 (strain 81-176).